The chain runs to 104 residues: Pole-localizer protein TmaR (104 aa).

Coiled-coil stretches lie at residues 13–43 (RKNKLKRELLDNEKKVRDNRKRVELLENLLD) and 76–96 (SAEISKARRDISRRIRELTEE).

Belongs to the pole-localizer TmaR family.

It localises to the cytoplasm. In terms of biological role, pole-localizer protein involved in the regulation of several cellular processes. The polypeptide is Pole-localizer protein TmaR (Vibrio vulnificus (strain CMCP6)).